Here is a 349-residue protein sequence, read N- to C-terminus: ATP phosphoribosyltransferase regulatory subunit (349 aa).

The disordered stretch occupies residues 325 to 349 (ANGRGRGVRPRRASARGGRAGTRPR). The span at 339–349 (ARGGRAGTRPR) shows a compositional bias: low complexity.

The protein belongs to the class-II aminoacyl-tRNA synthetase family. HisZ subfamily. In terms of assembly, heteromultimer composed of HisG and HisZ subunits.

The protein resides in the cytoplasm. It functions in the pathway amino-acid biosynthesis; L-histidine biosynthesis; L-histidine from 5-phospho-alpha-D-ribose 1-diphosphate: step 1/9. Its function is as follows. Required for the first step of histidine biosynthesis. May allow the feedback regulation of ATP phosphoribosyltransferase activity by histidine. This is ATP phosphoribosyltransferase regulatory subunit from Anaeromyxobacter dehalogenans (strain 2CP-C).